Reading from the N-terminus, the 576-residue chain is Nuclear protein localization protein 4 homolog (576 aa).

2 disordered regions span residues 67 to 96 and 200 to 219; these read LHLV…NNIS and QDDN…IKKS. Positions 72–94 are enriched in low complexity; sequence NNNNNNNDNKASSGSNNNNNNNN. Residues 208-218 are compositionally biased toward basic and acidic residues; sequence KDNKDNSEIKK. In terms of domain architecture, MPN spans 295–430; it reads GALVDFQSAN…MEAFQVSDQA (136 aa).

Belongs to the NPL4 family.

It participates in protein degradation; proteasomal ubiquitin-dependent pathway. Its function is as follows. May be part of a complex that binds ubiquitinated proteins and that is necessary for the export of misfolded proteins from the ER to the cytoplasm, where they are degraded by the proteasome. This Dictyostelium discoideum (Social amoeba) protein is Nuclear protein localization protein 4 homolog (nploc4).